Here is a 246-residue protein sequence, read N- to C-terminus: Bacteriorhodopsin-II-like protein (246 aa).

The next 7 membrane-spanning stretches (helical) occupy residues 7–27, 45–65, 82–102, 107–127, 135–155, 182–202, and 205–225; these read EATW…YFAV, TLIP…LGVI, YADW…VAGA, LYKL…GSMM, IVWW…LLGE, WALY…IIAV, and EIML…AVLL. Position 217 is an N6-(retinylidene)lysine (Lys217).

It belongs to the archaeal/bacterial/fungal opsin family. In terms of processing, the covalent binding of retinal to the apoprotein, bacterioopsin, generates bacteriorhodopsin.

The protein localises to the cell membrane. Has no proton-pumping activity but is potentially capable of functioning as a sensory SRII-like protein. The chromophore contains 36.5% all-trans-, 7.6% 11-cis- and 56.4% 13-cis-retinal in the dark and 30.1% 11-cis- and 47.7% 13-cis-retinal upon illumination with &gt;460 nm light. The chain is Bacteriorhodopsin-II-like protein (bop2) from Haloquadratum walsbyi (strain DSM 16790 / HBSQ001).